The chain runs to 876 residues: Phosphoenolpyruvate carboxylase (876 aa).

Active-site residues include His138 and Lys544.

Belongs to the PEPCase type 1 family. Mg(2+) serves as cofactor.

The catalysed reaction is oxaloacetate + phosphate = phosphoenolpyruvate + hydrogencarbonate. Its function is as follows. Forms oxaloacetate, a four-carbon dicarboxylic acid source for the tricarboxylic acid cycle. This chain is Phosphoenolpyruvate carboxylase, found in Marinomonas sp. (strain MWYL1).